We begin with the raw amino-acid sequence, 143 residues long: Large ribosomal subunit protein uL11 (143 aa).

Belongs to the universal ribosomal protein uL11 family. As to quaternary structure, part of the ribosomal stalk of the 50S ribosomal subunit. Interacts with L10 and the large rRNA to form the base of the stalk. L10 forms an elongated spine to which L12 dimers bind in a sequential fashion forming a multimeric L10(L12)X complex. Post-translationally, one or more lysine residues are methylated.

Its function is as follows. Forms part of the ribosomal stalk which helps the ribosome interact with GTP-bound translation factors. The protein is Large ribosomal subunit protein uL11 of Alkalilimnicola ehrlichii (strain ATCC BAA-1101 / DSM 17681 / MLHE-1).